We begin with the raw amino-acid sequence, 316 residues long: Lipoyl synthase (316 aa).

Positions 61, 66, 72, 87, 91, 94, and 301 each coordinate [4Fe-4S] cluster. The Radical SAM core domain occupies 73-290; sequence FGKGTATFMI…ERAAIEMGFS (218 aa).

The protein belongs to the radical SAM superfamily. Lipoyl synthase family. Requires [4Fe-4S] cluster as cofactor.

The protein localises to the cytoplasm. The enzyme catalyses [[Fe-S] cluster scaffold protein carrying a second [4Fe-4S](2+) cluster] + N(6)-octanoyl-L-lysyl-[protein] + 2 oxidized [2Fe-2S]-[ferredoxin] + 2 S-adenosyl-L-methionine + 4 H(+) = [[Fe-S] cluster scaffold protein] + N(6)-[(R)-dihydrolipoyl]-L-lysyl-[protein] + 4 Fe(3+) + 2 hydrogen sulfide + 2 5'-deoxyadenosine + 2 L-methionine + 2 reduced [2Fe-2S]-[ferredoxin]. Its pathway is protein modification; protein lipoylation via endogenous pathway; protein N(6)-(lipoyl)lysine from octanoyl-[acyl-carrier-protein]: step 2/2. In terms of biological role, catalyzes the radical-mediated insertion of two sulfur atoms into the C-6 and C-8 positions of the octanoyl moiety bound to the lipoyl domains of lipoate-dependent enzymes, thereby converting the octanoylated domains into lipoylated derivatives. This chain is Lipoyl synthase, found in Nitrosospira multiformis (strain ATCC 25196 / NCIMB 11849 / C 71).